A 235-amino-acid chain; its full sequence is Calcium-activated potassium channel subunit beta-2 (235 aa).

The tract at residues 1 to 45 (MFIWTSGRTSSSYRHDEKRNIYQKIRDHDLLDKRKTVTALKAGED) is ball and chain. Residues 1-46 (MFIWTSGRTSSSYRHDEKRNIYQKIRDHDLLDKRKTVTALKAGEDR) are Cytoplasmic-facing. The helical transmembrane segment at 47–67 (AILLGLAMMVCSIMMYFLLGI) threads the bilayer. At 68-194 (TLLRSYMQSV…VILTKLYSSN (127 aa)) the chain is on the extracellular side. Residues Asn-88, Asn-96, and Asn-119 are each glycosylated (N-linked (GlcNAc...) asparagine). Residues 195-215 (VLFHSLFWPTCMMAGGVAIVA) form a helical membrane-spanning segment. The Cytoplasmic segment spans residues 216–235 (MVKLTQYLSLLCERIQRINR).

Belongs to the KCNMB (TC 8.A.14.1) family. KCNMB2 subfamily. In terms of assembly, interacts with KCNMA1 tetramer. There are probably 4 molecules of KCMNB2 per KCNMA1 tetramer. In terms of processing, N-glycosylated. In terms of tissue distribution, expressed in kidney, heart and brain. Highly expressed in ovary. Expressed at low level in other tissues.

Its subcellular location is the membrane. In terms of biological role, regulatory subunit of the calcium activated potassium KCNMA1 (maxiK) channel. Modulates the calcium sensitivity and gating kinetics of KCNMA1, thereby contributing to KCNMA1 channel diversity. Acts as a negative regulator that confers rapid and complete inactivation of KCNMA1 channel complex. May participate in KCNMA1 inactivation in chromaffin cells of the adrenal gland or in hippocampal CA1 neurons. The protein is Calcium-activated potassium channel subunit beta-2 (KCNMB2) of Homo sapiens (Human).